The following is an 83-amino-acid chain: Small ribosomal subunit protein uS17 (83 aa).

This sequence belongs to the universal ribosomal protein uS17 family. Part of the 30S ribosomal subunit.

In terms of biological role, one of the primary rRNA binding proteins, it binds specifically to the 5'-end of 16S ribosomal RNA. The sequence is that of Small ribosomal subunit protein uS17 from Chlamydia muridarum (strain MoPn / Nigg).